Reading from the N-terminus, the 350-residue chain is Nicotinate-nucleotide--dimethylbenzimidazole phosphoribosyltransferase (350 aa).

Glu316 functions as the Proton acceptor in the catalytic mechanism.

This sequence belongs to the CobT family.

The enzyme catalyses 5,6-dimethylbenzimidazole + nicotinate beta-D-ribonucleotide = alpha-ribazole 5'-phosphate + nicotinate + H(+). The protein operates within nucleoside biosynthesis; alpha-ribazole biosynthesis; alpha-ribazole from 5,6-dimethylbenzimidazole: step 1/2. Catalyzes the synthesis of alpha-ribazole-5'-phosphate from nicotinate mononucleotide (NAMN) and 5,6-dimethylbenzimidazole (DMB). The protein is Nicotinate-nucleotide--dimethylbenzimidazole phosphoribosyltransferase of Pseudomonas syringae pv. syringae (strain B728a).